A 160-amino-acid chain; its full sequence is Large ribosomal subunit protein uL11 (160 aa).

Belongs to the universal ribosomal protein uL11 family. As to quaternary structure, part of the ribosomal stalk of the 50S ribosomal subunit. Interacts with L10 and the large rRNA to form the base of the stalk. L10 forms an elongated spine to which L12 dimers bind in a sequential fashion forming a multimeric L10(L12)X complex.

Functionally, forms part of the ribosomal stalk which helps the ribosome interact with GTP-bound translation factors. This chain is Large ribosomal subunit protein uL11, found in Methanococcus aeolicus (strain ATCC BAA-1280 / DSM 17508 / OCM 812 / Nankai-3).